We begin with the raw amino-acid sequence, 446 residues long: Chromosomal replication initiator protein DnaA (446 aa).

The tract at residues Met-1 to Gln-82 is domain I, interacts with DnaA modulators. The tract at residues Asn-83 to Thr-103 is domain II. The segment at Ser-104 to Asp-332 is domain III, AAA+ region. ATP contacts are provided by Gly-154, Leu-155, Gly-156, Lys-157, and Thr-158. Thr-158 lines the Mg(2+) pocket. The short motif at Ser-182–Arg-206 is the Initiator specific motif (ISM) element. The Mg(2+) site is built by Asp-214 and Asp-215. Residues Ile-333–Ile-346 are linker. Residues Pro-347–Lys-446 are domain IV, binds dsDNA.

Belongs to the DnaA family. The DNA replisome assembles sequentially on oriC in this order; DnaA, DnaD, DnaB, DnaI-DnaC helicase. Oligomerizes as a right-handed, spiral filament on DNA at oriC. Forms an ATP-dependent helix on DNA at oriC; both DnaD and YabA inhibit formation of the DnaA helix. Forms an ATP-dependent oligomer, formation is stimulated by ds- and ssDNA; monomeric ADP-Soj inhibits oligomer formation. Interacts with DnaD. Interacts with YabA, and via YabA, with the replication machinery subunit beta sliding clamp DnaN. Interacts with YabA via domain IIIa (residues 109-275). Isolated domain I forms a 1:1 complex with SirA. Interacts with Soj, probably via domain III. Interacts via domains I and III with CcrZ. Interacts via domain IV with skin prophage-like element protein YqaH.

The protein resides in the cytoplasm. Its subcellular location is the nucleoid. It carries out the reaction ATP + H2O = ADP + phosphate + H(+). With respect to regulation, oligomerization of DnaA can be controlled by Soj; monomeric ADP-Soj inhibits formation of the DnaA helix. YabA prevents the cooperative binding of DnaA-ATP to oriC-containing sequences; increased levels of DnaN (beta sliding clamp subunit of DNA polymerase) removes YabA from association with DnaA on the chromosome, enabling increased association of DnaA with its chromosomal binding sites. Both Soj and YabA chase DnaA from oriC site, YabA tethers DnaA to the DNA replication fork via the beta sliding clamp subunit DnaN. SirA antagonizes the ability of DnaA to bind to the replication origin, and thus decreases replication inititation during sporulation. Small protein YqaH, part of the skin prophage-like element, binds to DnaA and antagonizes its replication initiation and transcriptional regulation activities. Plays an essential role in the initiation and regulation of chromosomal replication. ATP-DnaA binds to the origin of replication (oriC) to initiate formation of the DNA replication initiation complex once per cell cycle. Binds directly to oriC at a 9 bp consensus (DnaA box): 5'-TTATCCACA-3' and separates the double-stranded (ds)DNA. Forms a right-handed helical filament on oriC DNA; dsDNA binds to the exterior of the filament while single-stranded (ss)DNA is stabilized in the filament's interior. The ATP-DnaA-oriC complex binds and stabilizes one strand of the AT-rich DNA unwinding element (DUE or basal unwinding system, BUS), permitting loading of DNA polymerase. Binds ATP with high affinity, ADP with lower affinity, but not AMP, cAMP or cGMP; ATP stimulates binding to DnaA boxes. Once bound promotes sequence-specific strand separation of DnaA-trios (3'-GAT-5' consensus) adjacent to oriC in the presence of ATP but not ADP. Domains III and IV are sufficient to separate dsDNA strands. The 'initiator specific motif' (ISM) of domain III contacts the middle adenine residue of the DnaA-trio probably stretching and stabilizing ssDNA. DnaA-trio recognition is co-operative and depends on DnaA self-assembly. The ssDNA serves as an assembly region for the replication machinery. Tethered to DnaN (beta sliding clamp subunit of DNA polymerase) and thus replication forks by YabA. During replication initiation DnaA-ATP binds cooperatively to sequences in oriC. YabA prevents this cooperative binding while still allowing DnaA to bind DNA. During the cell cycle an initial phase occurs in which DnaA is associated with origin regions, then the origin regions become spatially separate from the centrally sequestered DnaA molecules, and most DnaA molecules are unable to reassociate with origin regions. Does not require YabA to bind DNA. During sporulation SirA prevents DnaA association with the replication origin to prevent excessive chromosome replication. Overexpression induces the SOS response; increasing expression of downstream dnaN blocks this induction. Over-initiation of DNA replication is very deleterious; isolated suppressors in relA, ndrR, dnaC, cshA and crrZ increase replication elongation, decrease replication inititation or lead to a decrease in the replicative DNA helicase. Binds acidic phospholipids. In terms of biological role, the half-life of ADP-DnaA is 1.5 minutes, of ATP-DnaA is 5 minutes at 37 degrees Celsius; in E.coli the half-life of ADP-DnaA is about 45 minutes. Its function is as follows. Also acts as a transcriptional regulator. DnaA inhibits its own gene expression. DnaA binds specifically to the promoter regions of at least 20 operons (56 genes), including itself, sda and dnaB, and probably controls their expression in response to DNA replication inhibition. The sequence is that of Chromosomal replication initiator protein DnaA from Bacillus subtilis (strain 168).